Consider the following 398-residue polypeptide: Probable aminomethyltransferase (398 aa).

It belongs to the GcvT family. As to quaternary structure, the glycine cleavage system is composed of four proteins: P, T, L and H.

It catalyses the reaction N(6)-[(R)-S(8)-aminomethyldihydrolipoyl]-L-lysyl-[protein] + (6S)-5,6,7,8-tetrahydrofolate = N(6)-[(R)-dihydrolipoyl]-L-lysyl-[protein] + (6R)-5,10-methylene-5,6,7,8-tetrahydrofolate + NH4(+). The glycine cleavage system catalyzes the degradation of glycine. The chain is Probable aminomethyltransferase from Pyrococcus furiosus (strain ATCC 43587 / DSM 3638 / JCM 8422 / Vc1).